A 340-amino-acid polypeptide reads, in one-letter code: Aldo-keto reductase yakc [NADP(+)] (340 aa).

The Proton donor role is filled by Y56. H126 is a substrate binding site. Residue 208–218 participates in NADP(+) binding; sequence APLGRGFLTGA.

This sequence belongs to the aldo/keto reductase family. Aldo/keto reductase 2 subfamily. As to quaternary structure, monomer.

In Schizosaccharomyces pombe (strain 972 / ATCC 24843) (Fission yeast), this protein is Aldo-keto reductase yakc [NADP(+)] (yakc).